A 382-amino-acid chain; its full sequence is Na(+)/H(+) antiporter NhaA 2 (382 aa).

A run of 11 helical transmembrane segments spans residues 7–27 (MVLS…LALL), 58–78 (LDLW…GLEL), 94–114 (SLPI…FIAI), 124–144 (GWAI…MLLG), 153–173 (LFLL…IALF), 178–198 (LSAL…LLNY), 199–219 (YHIT…IAML), 255–275 (NPWV…GIDI), 291–311 (IILG…FIAI), 327–347 (FYGI…IDGL), and 361–381 (LAIL…LKIV).

The protein belongs to the NhaA Na(+)/H(+) (TC 2.A.33) antiporter family.

The protein localises to the cell inner membrane. The enzyme catalyses Na(+)(in) + 2 H(+)(out) = Na(+)(out) + 2 H(+)(in). Functionally, na(+)/H(+) antiporter that extrudes sodium in exchange for external protons. This chain is Na(+)/H(+) antiporter NhaA 2, found in Campylobacter jejuni (strain RM1221).